The chain runs to 506 residues: MVKIRPDEISSIIKQQIEQYQQEVKAVNVGTVFQVGDGIARIYGLDKVMAGELVEFEDGTVGIALNLEAKNVGAVLMGEGTRVQEGSSVRATGKIAQIPVGDGYLGRVVNSLARPIDGKGEIATKENRLIESPAPGIISRRSVHEPLQTGIVAIDAMIPIGRGQRELIIGDRQTGKTAIAVDTILNQKGKDVVCVYVAIGQKASSIAQVVNTLQERGAMDYTIIVAATADSPATLQYLSPYTGAALAEYFMYTGRHTLVIYDDLTKQAQAYREMSLLLRRPPGREAYPGDVFYLHSRLLERAAKLNDKLGSGSMTALPVVETQEGDVSAYIPTNVISITDGQIFLSADIFNAGIRPAINVGISVSRVGSAAQPKAMKQVAGKLKLELAQFAELEAFSQFASDLDQATQNQLARGQRLRELLKQSQSSPLSLEDQVASIYAGTNGYLDVLPADRVRAFLVGLRQYLATNKAKYGEILRSTNALTDEAQTLLKEALKEYTEEFLASAK.

ATP is bound at residue 170-177 (GDRQTGKT).

It belongs to the ATPase alpha/beta chains family. In terms of assembly, F-type ATPases have 2 components, CF(1) - the catalytic core - and CF(0) - the membrane proton channel. CF(1) has five subunits: alpha(3), beta(3), gamma(1), delta(1), epsilon(1). CF(0) has four main subunits: a, b, b' and c.

It is found in the plastid. The protein resides in the chloroplast thylakoid membrane. The enzyme catalyses ATP + H2O + 4 H(+)(in) = ADP + phosphate + 5 H(+)(out). Functionally, produces ATP from ADP in the presence of a proton gradient across the membrane. The alpha chain is a regulatory subunit. In Chlorella vulgaris (Green alga), this protein is ATP synthase subunit alpha, chloroplastic.